A 117-amino-acid polypeptide reads, in one-letter code: Ribonuclease P protein component (117 aa).

Belongs to the RnpA family. Consists of a catalytic RNA component (M1 or rnpB) and a protein subunit.

The enzyme catalyses Endonucleolytic cleavage of RNA, removing 5'-extranucleotides from tRNA precursor.. RNaseP catalyzes the removal of the 5'-leader sequence from pre-tRNA to produce the mature 5'-terminus. It can also cleave other RNA substrates such as 4.5S RNA. The protein component plays an auxiliary but essential role in vivo by binding to the 5'-leader sequence and broadening the substrate specificity of the ribozyme. The protein is Ribonuclease P protein component of Thermotoga maritima (strain ATCC 43589 / DSM 3109 / JCM 10099 / NBRC 100826 / MSB8).